The chain runs to 134 residues: Cytochrome b (134 aa).

3 helical membrane passes run 33–53 (FGSL…FLAM), 77–98 (WLLR…YLHV), and 113–133 (WNIG…GYVL). 2 residues coordinate heme b: His83 and His97.

The protein belongs to the cytochrome b family. The cytochrome bc1 complex contains 11 subunits: 3 respiratory subunits (MT-CYB, CYC1 and UQCRFS1), 2 core proteins (UQCRC1 and UQCRC2) and 6 low-molecular weight proteins (UQCRH/QCR6, UQCRB/QCR7, UQCRQ/QCR8, UQCR10/QCR9, UQCR11/QCR10 and a cleavage product of UQCRFS1). This cytochrome bc1 complex then forms a dimer. Heme b is required as a cofactor.

The protein localises to the mitochondrion inner membrane. Functionally, component of the ubiquinol-cytochrome c reductase complex (complex III or cytochrome b-c1 complex) that is part of the mitochondrial respiratory chain. The b-c1 complex mediates electron transfer from ubiquinol to cytochrome c. Contributes to the generation of a proton gradient across the mitochondrial membrane that is then used for ATP synthesis. The protein is Cytochrome b (MT-CYB) of Chiroderma salvini (Salvin's big-eyed bat).